A 627-amino-acid chain; its full sequence is (-)-alpha-terpineol synthase, chloroplastic (627 aa).

The transit peptide at 1–52 (MDLISVLPSASKSCVCLHKPLSSSTHKLKPFCKTIRILVMPRRWEFARPSMS) directs the protein to the chloroplast. Residues aspartate 378, aspartate 382, and aspartate 530 each contribute to the Mg(2+) site. The short motif at 378–382 (DDMYD) is the DDXXD motif element.

This sequence belongs to the terpene synthase family. Tpsd subfamily. Mg(2+) serves as cofactor. Mn(2+) is required as a cofactor.

It localises to the plastid. It is found in the chloroplast. The enzyme catalyses (2E)-geranyl diphosphate + H2O = (S)-alpha-terpineol + diphosphate. It functions in the pathway terpene metabolism; oleoresin biosynthesis. Functionally, involved in defensive oleoresin formation in conifers in response to insect attack or other injury. Involved in monoterpene (C10) olefins biosynthesis. Produces 57.3% alpha-terpineol (15.1% (+)/84.9% (-)), 27.6% limonene (25.2% (+)/74.8% (-)), 8% terpinolene, 4.7% beta-pinene (14.8% (+)/85.2% (-)), 1.3% alpha-pinene (100% (+)) and 1.1% myrcene. This chain is (-)-alpha-terpineol synthase, chloroplastic (PT10), found in Pinus taeda (Loblolly pine).